A 211-amino-acid polypeptide reads, in one-letter code: Molybdenum cofactor guanylyltransferase (211 aa).

Residues 12–14 (LAG), lysine 25, asparagine 55, aspartate 73, and aspartate 103 contribute to the GTP site. Aspartate 103 is a binding site for Mg(2+).

This sequence belongs to the MobA family. As to quaternary structure, monomer. It depends on Mg(2+) as a cofactor.

It localises to the cytoplasm. The catalysed reaction is Mo-molybdopterin + GTP + H(+) = Mo-molybdopterin guanine dinucleotide + diphosphate. Its function is as follows. Transfers a GMP moiety from GTP to Mo-molybdopterin (Mo-MPT) cofactor (Moco or molybdenum cofactor) to form Mo-molybdopterin guanine dinucleotide (Mo-MGD) cofactor. This chain is Molybdenum cofactor guanylyltransferase, found in Albidiferax ferrireducens (strain ATCC BAA-621 / DSM 15236 / T118) (Rhodoferax ferrireducens).